Consider the following 168-residue polypeptide: ATP synthase subunit b (168 aa).

The chain crosses the membrane as a helical span at residues 9-29 (AIPFGTIAYTLFIFLLLLVML).

Belongs to the ATPase B chain family. F-type ATPases have 2 components, F(1) - the catalytic core - and F(0) - the membrane proton channel. F(1) has five subunits: alpha(3), beta(3), gamma(1), delta(1), epsilon(1). F(0) has three main subunits: a(1), b(2) and c(10-14). The alpha and beta chains form an alternating ring which encloses part of the gamma chain. F(1) is attached to F(0) by a central stalk formed by the gamma and epsilon chains, while a peripheral stalk is formed by the delta and b chains.

Its subcellular location is the cell membrane. Its function is as follows. F(1)F(0) ATP synthase produces ATP from ADP in the presence of a proton or sodium gradient. F-type ATPases consist of two structural domains, F(1) containing the extramembraneous catalytic core and F(0) containing the membrane proton channel, linked together by a central stalk and a peripheral stalk. During catalysis, ATP synthesis in the catalytic domain of F(1) is coupled via a rotary mechanism of the central stalk subunits to proton translocation. Functionally, component of the F(0) channel, it forms part of the peripheral stalk, linking F(1) to F(0). The sequence is that of ATP synthase subunit b from Bacillus thuringiensis (strain Al Hakam).